The following is a 185-amino-acid chain: Ribosome maturation factor RimM (185 aa).

The PRC barrel domain occupies 108-183 (PGEFHVTDLL…RLEIKTIPGL (76 aa)).

This sequence belongs to the RimM family. In terms of assembly, binds ribosomal protein uS19.

The protein localises to the cytoplasm. Its function is as follows. An accessory protein needed during the final step in the assembly of 30S ribosomal subunit, possibly for assembly of the head region. Essential for efficient processing of 16S rRNA. May be needed both before and after RbfA during the maturation of 16S rRNA. It has affinity for free ribosomal 30S subunits but not for 70S ribosomes. In Synechocystis sp. (strain ATCC 27184 / PCC 6803 / Kazusa), this protein is Ribosome maturation factor RimM.